The following is a 241-amino-acid chain: Guanosine phosphorylase (241 aa).

This sequence belongs to the PNP/UDP phosphorylase family.

It carries out the reaction guanosine + phosphate = alpha-D-ribose 1-phosphate + guanine. The enzyme catalyses a purine D-ribonucleoside + phosphate = a purine nucleobase + alpha-D-ribose 1-phosphate. The catalysed reaction is inosine + phosphate = alpha-D-ribose 1-phosphate + hypoxanthine. It catalyses the reaction adenosine + phosphate = alpha-D-ribose 1-phosphate + adenine. Its activity is regulated as follows. Activity is higher at low KCl concentrations. In terms of biological role, phosphorylase involved in the non-carboxylating pentose bisphosphate pathway, a nucleoside degradation pathway present in some halophilic archaea. Catalyzes the phosphorolytic cleavage of guanosine to guanine and ribose-1-phosphate (R1P). Exhibits the highest activity toward guanosine, but also shows lower activity against inosine and adenosine. In Halorubrum lacusprofundi (strain ATCC 49239 / DSM 5036 / JCM 8891 / ACAM 34), this protein is Guanosine phosphorylase.